The following is a 225-amino-acid chain: UPF0173 metal-dependent hydrolase Fjoh_2786 (225 aa).

It belongs to the UPF0173 family.

The protein is UPF0173 metal-dependent hydrolase Fjoh_2786 of Flavobacterium johnsoniae (strain ATCC 17061 / DSM 2064 / JCM 8514 / BCRC 14874 / CCUG 350202 / NBRC 14942 / NCIMB 11054 / UW101) (Cytophaga johnsonae).